A 157-amino-acid polypeptide reads, in one-letter code: Small ribosomal subunit protein uS7cz/uS7cy (157 aa).

It belongs to the universal ribosomal protein uS7 family. As to quaternary structure, part of the 30S ribosomal subunit.

The protein resides in the plastid. It localises to the chloroplast. Functionally, one of the primary rRNA binding proteins, it binds directly to 16S rRNA where it nucleates assembly of the head domain of the 30S subunit. This is Small ribosomal subunit protein uS7cz/uS7cy (rps7-A) from Gnetum parvifolium (Small-leaved jointfir).